The following is a 311-amino-acid chain: Protoheme IX farnesyltransferase (311 aa).

Helical transmembrane passes span 32–52, 53–73, 104–124, 125–145, 153–173, 180–200, 224–244, 245–265, and 290–310; these read VMSLVVFTALVGLVVSPVSIN, PWYGFLAILCIAIGGGGAGVL, FVFGMVLSMLSVLMMGKFINW, FAALLLAFTIFFYIVIYTIWL, IVIGGAAGAFPPMIGCAAATG, FLLFLIIFMWTPPHFWSLSLF, KQILFYTILMTISAAGPFIID, FAGIFYAIFSTILSVIFIYFA, and FYLAAIFGILLIEFLVWYFII.

This sequence belongs to the UbiA prenyltransferase family. Protoheme IX farnesyltransferase subfamily.

Its subcellular location is the cell inner membrane. It carries out the reaction heme b + (2E,6E)-farnesyl diphosphate + H2O = Fe(II)-heme o + diphosphate. It participates in porphyrin-containing compound metabolism; heme O biosynthesis; heme O from protoheme: step 1/1. In terms of biological role, converts heme B (protoheme IX) to heme O by substitution of the vinyl group on carbon 2 of heme B porphyrin ring with a hydroxyethyl farnesyl side group. This Bartonella quintana (strain Toulouse) (Rochalimaea quintana) protein is Protoheme IX farnesyltransferase.